The primary structure comprises 119 residues: MIQKNTLLDVADNSGARKVLCIGLLNGKKSASVGDVIVVSTKVVIPRGKVSKGKVYKAVIVRVKKAVRRLDGSVIKFSSNAVVLINDQGDPLGTRVFGPVKKLPFGLFSKVMSLAVEVL.

It belongs to the universal ribosomal protein uL14 family. Part of the 50S ribosomal subunit. Forms a cluster with proteins L3 and L19. In the 70S ribosome, L14 and L19 interact and together make contacts with the 16S rRNA in bridges B5 and B8.

Functionally, binds to 23S rRNA. Forms part of two intersubunit bridges in the 70S ribosome. The chain is Large ribosomal subunit protein uL14 from Ehrlichia ruminantium (strain Gardel).